The sequence spans 200 residues: ATP-dependent Clp protease proteolytic subunit 3 (200 aa).

Residue Ser-101 is the Nucleophile of the active site. His-126 is a catalytic residue.

Belongs to the peptidase S14 family. As to quaternary structure, fourteen ClpP subunits assemble into 2 heptameric rings which stack back to back to give a disk-like structure with a central cavity, resembling the structure of eukaryotic proteasomes.

The protein resides in the cytoplasm. The catalysed reaction is Hydrolysis of proteins to small peptides in the presence of ATP and magnesium. alpha-casein is the usual test substrate. In the absence of ATP, only oligopeptides shorter than five residues are hydrolyzed (such as succinyl-Leu-Tyr-|-NHMec, and Leu-Tyr-Leu-|-Tyr-Trp, in which cleavage of the -Tyr-|-Leu- and -Tyr-|-Trp bonds also occurs).. Its function is as follows. Cleaves peptides in various proteins in a process that requires ATP hydrolysis. Has a chymotrypsin-like activity. Plays a major role in the degradation of misfolded proteins. This Synechococcus sp. (strain CC9605) protein is ATP-dependent Clp protease proteolytic subunit 3.